Here is a 111-residue protein sequence, read N- to C-terminus: Large ribosomal subunit protein uL22 (111 aa).

It belongs to the universal ribosomal protein uL22 family. In terms of assembly, part of the 50S ribosomal subunit.

Functionally, this protein binds specifically to 23S rRNA; its binding is stimulated by other ribosomal proteins, e.g. L4, L17, and L20. It is important during the early stages of 50S assembly. It makes multiple contacts with different domains of the 23S rRNA in the assembled 50S subunit and ribosome. In terms of biological role, the globular domain of the protein is located near the polypeptide exit tunnel on the outside of the subunit, while an extended beta-hairpin is found that lines the wall of the exit tunnel in the center of the 70S ribosome. This Clostridium acetobutylicum (strain ATCC 824 / DSM 792 / JCM 1419 / IAM 19013 / LMG 5710 / NBRC 13948 / NRRL B-527 / VKM B-1787 / 2291 / W) protein is Large ribosomal subunit protein uL22.